A 524-amino-acid chain; its full sequence is uncharacterized protein (524 aa).

An N-terminal signal peptide occupies residues 1 to 26 (MLKIDMWFKLKSLGFSLISLQALLAS). The N-palmitoyl cysteine moiety is linked to residue cysteine 27. Cysteine 27 carries S-diacylglycerol cysteine lipidation. The interval 37-68 (IEEKNDSTTDNNATPFKDEQSDQGTEVNQQPK) is disordered. Residues 58 to 68 (DQGTEVNQQPK) show a composition bias toward polar residues.

Belongs to the MG067/MG068/MG395 family.

Its subcellular location is the cell membrane. This is an uncharacterized protein from Mycoplasma genitalium (strain ATCC 33530 / DSM 19775 / NCTC 10195 / G37) (Mycoplasmoides genitalium).